Consider the following 348-residue polypeptide: Anthranilate phosphoribosyltransferase (348 aa).

5-phospho-alpha-D-ribose 1-diphosphate-binding positions include Gly80, 83–84 (GD), Thr88, 90–93 (NVST), 108–116 (KHGNRSVSS), and Ser120. Gly80 contacts anthranilate. Ser92 is a Mg(2+) binding site. Anthranilate is bound at residue Asn111. Position 166 (Arg166) interacts with anthranilate. Mg(2+) contacts are provided by Asp224 and Glu225.

Belongs to the anthranilate phosphoribosyltransferase family. In terms of assembly, homodimer. The cofactor is Mg(2+).

The enzyme catalyses N-(5-phospho-beta-D-ribosyl)anthranilate + diphosphate = 5-phospho-alpha-D-ribose 1-diphosphate + anthranilate. Its pathway is amino-acid biosynthesis; L-tryptophan biosynthesis; L-tryptophan from chorismate: step 2/5. Catalyzes the transfer of the phosphoribosyl group of 5-phosphorylribose-1-pyrophosphate (PRPP) to anthranilate to yield N-(5'-phosphoribosyl)-anthranilate (PRA). The polypeptide is Anthranilate phosphoribosyltransferase (Sorangium cellulosum (strain So ce56) (Polyangium cellulosum (strain So ce56))).